Consider the following 93-residue polypeptide: Large ribosomal subunit protein bL27 (93 aa).

Positions 1–8 (MIMDLQFF) are excised as a propeptide. Residues 8–29 (FSHHKGGGSTANGRNSAGRRLG) form a disordered region.

It belongs to the bacterial ribosomal protein bL27 family. In terms of processing, the N-terminus is cleaved by ribosomal processing cysteine protease Prp.

The polypeptide is Large ribosomal subunit protein bL27 (Limosilactobacillus fermentum (strain NBRC 3956 / LMG 18251) (Lactobacillus fermentum)).